Here is a 480-residue protein sequence, read N- to C-terminus: MFS-type transporter oryF (480 aa).

The segment covering 1–10 (MAEEVNERTR) has biased composition (basic and acidic residues). The segment at 1 to 24 (MAEEVNERTRLLSQSDDPSPSLEE) is disordered. The segment covering 11–22 (LLSQSDDPSPSL) has biased composition (low complexity). 12 helical membrane passes run 41–61 (LCIA…AIIV), 81–101 (AFVS…GPLS), 107–127 (ISLL…CAFA), 138–158 (FITG…IGDL), 170–190 (LYTL…AYIV), 197–217 (AIFA…LCTL), 264–284 (FLGT…LFGL), 308–328 (ALNY…TGSL), 351–371 (ILML…GWSA), 378–398 (IMPN…YQCI), 415–435 (GALT…APLI), and 443–463 (WGSS…PILL).

The protein belongs to the major facilitator superfamily.

Its subcellular location is the membrane. MFS-type transporter; part of the gene cluster that mediates the biosynthesis of oryzines, natural products with an unusual maleidride backbone. The chain is MFS-type transporter oryF from Aspergillus oryzae (strain ATCC 42149 / RIB 40) (Yellow koji mold).